Reading from the N-terminus, the 333-residue chain is Nucleoid-associated protein HAPS_0704 (333 aa).

Belongs to the YejK family.

The protein resides in the cytoplasm. It localises to the nucleoid. In Glaesserella parasuis serovar 5 (strain SH0165) (Haemophilus parasuis), this protein is Nucleoid-associated protein HAPS_0704.